Consider the following 517-residue polypeptide: MALSDLVLLRWLRDSRHSRKLILFIVFLALLLDNMLLTVVVPIIPSYLYSIKHEKNTTEIQTARPALTASTSESFHSIFSYYNNSTVFTGNATGGLPGGESPKATTTQHTVTNTTVPPDCPSEDKDLLNENVQVGLLFASKATVQLLTNPFIGLLTNRIGYPIPMFAGFCIMFISTVMFAFSSSYAFLLIARSLQGIGSSCSSVAGMGMLASVYTDDEERGNAMGIALGGLAMGVLVGPPFGSVLYEFVGKTAPFLVLAALVLLDGAIQLFVLQPSRVQPESQKGTPLTTLLKDPYILIAAGSICFANMGIAMLEPALPIWMMETMCSRKWQLGVAFLPASISYLIGTNIFGILAHKMGRWLCALLGMIVVGISILCIPFAKNIYGLIAPNFGVGFAIGMVDSSMMPIMGYLVDLRHVSVYGSVYAIADVAFCMGYAIGPSAGGAIAKAIGFPWLMTIIGIIDIVFAPLCFFLRSPPAKEEKMAILMDHNCPIKTKMYTQNNVQPYPVGDDEESESD.

Residues 1 to 20 lie on the Cytoplasmic side of the membrane; that stretch reads MALSDLVLLRWLRDSRHSRK. A helical membrane pass occupies residues 21–41; it reads LILFIVFLALLLDNMLLTVVV. Topologically, residues 42–132 are extracellular; the sequence is PIIPSYLYSI…EDKDLLNENV (91 aa). N-linked (GlcNAc...) asparagine glycans are attached at residues N56, N83, N84, N91, and N113. Positions 100-119 are disordered; the sequence is ESPKATTTQHTVTNTTVPPD. The span at 105-115 shows a compositional bias: low complexity; the sequence is TTTQHTVTNTT. Cysteines 120 and 327 form a disulfide. The helical transmembrane segment at 133–153 threads the bilayer; sequence QVGLLFASKATVQLLTNPFIG. Topologically, residues 154–162 are cytoplasmic; that stretch reads LLTNRIGYP. Residues 163 to 183 traverse the membrane as a helical segment; the sequence is IPMFAGFCIMFISTVMFAFSS. Residues 184-192 lie on the Extracellular side of the membrane; the sequence is SYAFLLIAR. The helical transmembrane segment at 193-213 threads the bilayer; that stretch reads SLQGIGSSCSSVAGMGMLASV. Residues 214–222 are Cytoplasmic-facing; it reads YTDDEERGN. A helical transmembrane segment spans residues 223–245; that stretch reads AMGIALGGLAMGVLVGPPFGSVL. Serotonin-binding residues include L231 and V235. Residues 246–251 are Extracellular-facing; it reads YEFVGK. A helical transmembrane segment spans residues 252 to 274; that stretch reads TAPFLVLAALVLLDGAIQLFVLQ. Residues 275–294 are Cytoplasmic-facing; the sequence is PSRVQPESQKGTPLTTLLKD. Residues 295 to 314 traverse the membrane as a helical segment; it reads PYILIAAGSICFANMGIAML. The serotonin site is built by N308, I311, E315, F337, and Y344. At 315-331 the chain is on the extracellular side; it reads EPALPIWMMETMCSRKW. A helical transmembrane segment spans residues 332–355; sequence QLGVAFLPASISYLIGTNIFGILA. The Cytoplasmic segment spans residues 356 to 360; the sequence is HKMGR. The chain crosses the membrane as a helical span at residues 361–381; that stretch reads WLCALLGMIVVGISILCIPFA. Over 382–392 the chain is Extracellular; it reads KNIYGLIAPNF. A helical transmembrane segment spans residues 393 to 413; it reads GVGFAIGMVDSSMMPIMGYLV. Residue D402 coordinates serotonin. Topologically, residues 414-417 are cytoplasmic; that stretch reads DLRH. The chain crosses the membrane as a helical span at residues 418-438; it reads VSVYGSVYAIADVAFCMGYAI. Residue Y436 participates in serotonin binding. Topologically, residues 439-443 are extracellular; that stretch reads GPSAG. A helical membrane pass occupies residues 444 to 465; it reads GAIAKAIGFPWLMTIIGIIDIV. The Cytoplasmic segment spans residues 466–517; it reads FAPLCFFLRSPPAKEEKMAILMDHNCPIKTKMYTQNNVQPYPVGDDEESESD. Phosphoserine; by CK2 is present on residues S514 and S516.

Belongs to the major facilitator superfamily. Vesicular transporter family. Interacts with SLC6A3. Expressed in striata and substantia nigra.

It localises to the cytoplasmic vesicle. It is found in the secretory vesicle. The protein localises to the synaptic vesicle membrane. Its subcellular location is the secretory vesicle membrane. The protein resides in the cell projection. It localises to the axon. It is found in the dendrite. The enzyme catalyses serotonin(in) + 2 H(+)(out) = serotonin(out) + 2 H(+)(in). It carries out the reaction dopamine(in) + 2 H(+)(out) = dopamine(out) + 2 H(+)(in). The catalysed reaction is histamine(in) + 2 H(+)(out) = histamine(out) + 2 H(+)(in). Strongly inhibited by reserpine and tetrabenazine. Also inhibited to a lesser extent by ketanserin and fenfluramine. Reserpine and ketanserin inhibit by blocking the substrate-binding pocket. Tetrabenazine traps SLC18A2/VMAT2 in an occluded conformation and its inhibition is specific to SLC18A2/VMAT2 but not SLC18A1/VMAT1. Its function is as follows. Electrogenic antiporter that exchanges one cationic monoamine with two intravesicular protons across the membrane of secretory and synaptic vesicles. Uses the electrochemical proton gradient established by the V-type proton-pump ATPase to accumulate high concentrations of monoamines inside the vesicles prior to their release via exocytosis. Transports a variety of catecholamines such as dopamine, adrenaline and noradrenaline, histamine, and indolamines such as serotonin. Regulates the transvesicular monoaminergic gradient that determines the quantal size. Mediates somatodendritic dopamine release in hippocampal neurons, likely as part of a regulated secretory pathway that integrates retrograde synaptic signals. Acts as a primary transporter for striatal dopamine loading ensuring impulse-dependent release of dopamine at the synaptic cleft. Responsible for histamine and serotonin storage and subsequent corelease from mast cell granules. This is Synaptic vesicular amine transporter (Slc18a2) from Mus musculus (Mouse).